Here is a 740-residue protein sequence, read N- to C-terminus: MAFFSPWKLSSQKLGFFLVTFGFIWGMMLLHFTIQQRTQPESSSMLREQILDLSKRYIKALAEENRDVVDGPYAGVMTAYDLKKTLAVLLDNILQRIGKLESKVDNLVNGTGANSTNSTTAVPSLVSLEKINVADIINGVQEKCVLPPMDGYPHCEGKIKWMKDMWRSDPCYADYGVDGTSCSFFIYLSEVENWCPRLPWRAKNPYEEADHNSLAEIRTDFNILYGMMKKHEEFRWMRLRIRRMADAWIQAIKSLAEKQNLEKRKRKKILVHLGLLTKESGFKIAETAFSGGPLGELVQWSDLITSLYLLGHDIRISASLAELKEIMKKVVGNRSGCPTVGDRIVELIYIDIVGLAQFKKTLGPSWVHYQCMLRVLDSFGTEPEFNHASYAQSKGHKTPWGKWNLNPQQFYTMFPHTPDNSFLGFVVEQHLNSSDIHHINEIKRQNQSLVYGKVDSFWKNKKIYLDIIHTYMEVHATVYGSSTKNIPSYVKNHGILSGRDLQFLLRETKLFVGLGFPYEGPAPLEAIANGCAFLNPKFNPPKSSKNTDFFIGKPTLRELTSQHPYAEVFIGRPHVWTVDLNNREEVEDAVKAILNQKIEPYMPYEFTCEGMLQRINAFIEKQDFCHGQVMWPPLSALQVKLAEPGQSCKQVCQESQLICEPSFFQHLNKEKDLLKYKVTCQSSELYKDILVPSFYPKSKHCVFQGDLLLFSCAGAHPTHQRICPCRDFIKGQVALCKDCL.

Over 1 to 13 the chain is Cytoplasmic; it reads MAFFSPWKLSSQK. The chain crosses the membrane as a helical; Signal-anchor for type II membrane protein span at residues 14–30; sequence LGFFLVTFGFIWGMMLL. Residues 31–740 are Lumenal-facing; the sequence is HFTIQQRTQP…GQVALCKDCL (710 aa). Residues Asn109, Asn114, and Asn117 are each glycosylated (N-linked (GlcNAc...) asparagine). 9 cysteine pairs are disulfide-bonded: Cys144-Cys182, Cys155-Cys195, Cys171-Cys337, Cys371-Cys625, Cys648-Cys723, Cys652-Cys725, Cys659-Cys712, Cys680-Cys701, and Cys736-Cys739. The interval 212 to 740 is sufficient for catalytic activity; sequence NSLAEIRTDF…GQVALCKDCL (529 aa). Asn333 carries N-linked (GlcNAc...) asparagine glycosylation. 377-378 serves as a coordination point for substrate; sequence DS. N-linked (GlcNAc...) asparagine glycans are attached at residues Asn432 and Asn446. Glu525 serves as a coordination point for UDP-N-acetyl-alpha-D-glucosamine. Lys553 lines the substrate pocket.

This sequence belongs to the glycosyltransferase 18 family. Post-translationally, N-glycosylated. A secreted form is released from the membrane after cleavage by gamma-secretase. Detected in cerebellum.

The protein localises to the golgi apparatus membrane. It is found in the perikaryon. Its subcellular location is the secreted. The enzyme catalyses N(4)-{beta-D-GlcNAc-(1-&gt;2)-[beta-D-GlcNAc-(1-&gt;4)]-alpha-D-Man-(1-&gt;3)-[beta-D-GlcNAc-(1-&gt;2)-alpha-D-Man-(1-&gt;6)]-beta-D-Man-(1-&gt;4)-beta-D-GlcNAc-(1-&gt;4)-beta-D-GlcNAc}-L-asparaginyl-[protein] + UDP-N-acetyl-alpha-D-glucosamine = N(4)-{beta-D-GlcNAc-(1-&gt;2)-[beta-D-GlcNAc-(1-&gt;4)]-alpha-D-Man-(1-&gt;3)-[beta-D-GlcNAc-(1-&gt;2)-[beta-D-GlcNAc-(1-&gt;6)]-alpha-D-Man-(1-&gt;6)]-beta-D-Man-(1-&gt;4)-beta-D-GlcNAc-(1-&gt;4)-beta-D-GlcNAc}-L-asparaginyl-[protein] + UDP + H(+). The protein operates within protein modification; protein glycosylation. Catalyzes the addition of N-acetylglucosamine (GlcNAc) in beta 1-6 linkage to the alpha-linked mannose of biantennary N-linked oligosaccharides. Catalyzes an important step in the biosynthesis of branched, complex-type N-glycans, such as those found on EGFR, TGFR (TGF-beta receptor) and CDH2. Via its role in the biosynthesis of complex N-glycans, plays an important role in the activation of cellular signaling pathways, reorganization of the actin cytoskeleton, cell-cell adhesion and cell migration. MGAT5-dependent EGFR N-glycosylation enhances the interaction between EGFR and LGALS3 and thereby prevents rapid EGFR endocytosis and prolongs EGFR signaling. Required for efficient interaction between TGFB1 and its receptor. Enhances activation of intracellular signaling pathways by several types of growth factors, including FGF2, PDGF, IGF, TGFB1 and EGF. MGAT5-dependent CDH2 N-glycosylation inhibits CDH2-mediated homotypic cell-cell adhesion and contributes to the regulation of downstream signaling pathways. Promotes cell migration. Contributes to the regulation of the inflammatory response. MGAT5-dependent TCR N-glycosylation enhances the interaction between TCR and LGALS3, limits agonist-induced TCR clustering, and thereby dampens TCR-mediated responses to antigens. Required for normal leukocyte evasation and accumulation at sites of inflammation. Inhibits attachment of monocytes to the vascular endothelium and subsequent monocyte diapedesis. Functionally, promotes proliferation of umbilical vein endothelial cells and angiogenesis, at least in part by promoting the release of the growth factor FGF2 from the extracellular matrix. The chain is Alpha-1,6-mannosylglycoprotein 6-beta-N-acetylglucosaminyltransferase A (Mgat5) from Mus musculus (Mouse).